Consider the following 655-residue polypeptide: NADH-ubiquinone oxidoreductase chain 5 (655 aa).

16 helical membrane-spanning segments follow: residues 3-23, 34-54, 84-104, 116-136, 137-157, 180-200, 204-224, 244-264, 276-296, 304-322, 332-354, 370-390, 413-433, 456-476, 516-536, and 629-649; these read NAIS…LFFG, MTST…YQLL, LTIT…IYSI, FFSL…GSNY, FVLF…ISFW, FFVL…YSTI, AYLI…IAAM, TPVS…YLLL, VLFI…LIAI, IIAL…AIGL, LLGH…HSIL, LPYT…MPGL, VVYW…MKIL, IYIT…GWIL, ISAI…AIVF, and LLLV…LISI.

It belongs to the complex I subunit 5 family. As to quaternary structure, complex I is composed of 37 different subunits.

The protein localises to the mitochondrion inner membrane. The catalysed reaction is a ubiquinone + NADH + 5 H(+)(in) = a ubiquinol + NAD(+) + 4 H(+)(out). Its function is as follows. Core subunit of the mitochondrial membrane respiratory chain NADH dehydrogenase (Complex I) that is believed to belong to the minimal assembly required for catalysis. Complex I functions in the transfer of electrons from NADH to the respiratory chain. The immediate electron acceptor for the enzyme is believed to be ubiquinone. In Yarrowia lipolytica (strain CLIB 122 / E 150) (Yeast), this protein is NADH-ubiquinone oxidoreductase chain 5 (ND5).